The primary structure comprises 397 residues: Phosphoglycerate kinase (397 aa).

Residues 25–27, Arg41, 64–67, Arg118, and Arg151 each bind substrate; these read DLN and HLGR. ATP contacts are provided by residues Lys202, Glu324, and 350-353; that span reads GGDT.

It belongs to the phosphoglycerate kinase family. In terms of assembly, monomer.

The protein resides in the cytoplasm. The catalysed reaction is (2R)-3-phosphoglycerate + ATP = (2R)-3-phospho-glyceroyl phosphate + ADP. The protein operates within carbohydrate degradation; glycolysis; pyruvate from D-glyceraldehyde 3-phosphate: step 2/5. The sequence is that of Phosphoglycerate kinase from Herminiimonas arsenicoxydans.